Here is an 888-residue protein sequence, read N- to C-terminus: Serine/arginine repetitive matrix protein 1 (888 aa).

In terms of domain architecture, PWI spans 27 to 126 (QLKFAECLEK…AGIPTAFLEL (100 aa)). The span at 139–169 (EKLASMKKQDEDKEKRDKEDKDNREKRDRSR) shows a compositional bias: basic and acidic residues. The interval 139–888 (EKLASMKKQD…MRKAQVSPPS (750 aa)) is disordered. Residues 170–206 (SPRRRKSRSPSPRRRSSPIRRERKRSHSRSPHHRTKS) show a composition bias toward basic residues. Basic and acidic residues-rich tracts occupy residues 213-232 (PEKK…KETV) and 254-276 (ETKE…EKTR). Basic residues-rich tracts occupy residues 277 to 325 (QRSP…RTPP) and 332 to 347 (PRHR…RRRS). Composition is skewed to low complexity over residues 348–364 (SASL…SRSR) and 473–496 (SVQQ…SSSS). Composition is skewed to basic residues over residues 528–554 (PRKR…RRRS) and 561–585 (PRRR…RSPS). Over residues 586–598 (PRRYSPPIQRRYS) the composition is skewed to low complexity. Basic residues-rich tracts occupy residues 614–629 (PKRR…RRVS) and 642–656 (AKRR…HRKG). A compositionally biased stretch (basic and acidic residues) spans 662–677 (SNRETRSPPQNKRDSP). Low complexity-rich tracts occupy residues 697–712 (ASAS…PSTR), 728–749 (ASTP…SGSP), and 763–775 (ARSR…WSPA). The span at 780–790 (SPTQSPSPARN) shows a compositional bias: polar residues. Basic residues predominate over residues 798–823 (KKKKKKKDKKHKKDKKHKKHKKHKKE). Positions 826–843 (AVAAAPAAVAAADTTSAQ) are enriched in low complexity. Residues 866–876 (DLEKHLREKAL) show a composition bias toward basic and acidic residues.

Belongs to the splicing factor SR family.

The protein resides in the nucleus. Functionally, involved in pre-mRNA splicing and processing events. The sequence is that of Serine/arginine repetitive matrix protein 1 (SRRM1) from Gallus gallus (Chicken).